The primary structure comprises 276 residues: Rhomboid protease GlpG (276 aa).

6 helical membrane passes run 94-114, 142-162, 169-189, 192-212, 229-249, and 250-270; these read GPVT…MQIL, ALMH…WYLG, LGSG…GYVQ, FSGP…GYVW, LIIF…GMSM, and ANGA…VDSL. Serine 201 functions as the Nucleophile in the catalytic mechanism. Residue histidine 254 is part of the active site.

This sequence belongs to the peptidase S54 family.

The protein resides in the cell inner membrane. It carries out the reaction Cleaves type-1 transmembrane domains using a catalytic dyad composed of serine and histidine that are contributed by different transmembrane domains.. In terms of biological role, rhomboid-type serine protease that catalyzes intramembrane proteolysis. The sequence is that of Rhomboid protease GlpG from Shigella boydii serotype 4 (strain Sb227).